A 484-amino-acid chain; its full sequence is Phosphomethylpyrimidine synthase (484 aa).

Residues Asn97, Met126, Tyr156, His192, 212–214 (SRG), 253–256 (DSLR), and Glu292 each bind substrate. His296 provides a ligand contact to Zn(2+). Tyr319 contacts substrate. Residue His360 coordinates Zn(2+). [4Fe-4S] cluster is bound by residues Cys440, Cys443, and Cys448.

The protein belongs to the ThiC family. [4Fe-4S] cluster is required as a cofactor.

It carries out the reaction 5-amino-1-(5-phospho-beta-D-ribosyl)imidazole + S-adenosyl-L-methionine = 4-amino-2-methyl-5-(phosphooxymethyl)pyrimidine + CO + 5'-deoxyadenosine + formate + L-methionine + 3 H(+). The protein operates within cofactor biosynthesis; thiamine diphosphate biosynthesis. Its function is as follows. Catalyzes the synthesis of the hydroxymethylpyrimidine phosphate (HMP-P) moiety of thiamine from aminoimidazole ribotide (AIR) in a radical S-adenosyl-L-methionine (SAM)-dependent reaction. This chain is Phosphomethylpyrimidine synthase, found in Synechococcus sp. (strain CC9605).